We begin with the raw amino-acid sequence, 727 residues long: Probable copper-importing P-type ATPase A (727 aa).

The Cytoplasmic segment spans residues 1–94 (MATNTKMETF…QTYLRKMKFD (94 aa)). Residues 6–70 (KMETFVITGM…SVENIGYGAI (65 aa)) enclose the HMA domain. Residues C17 and C20 each coordinate Cu(+). Residues 95 to 115 (LIFSAILTLPLMLAMIAMMLG) traverse the membrane as a helical segment. Over 116-119 (SHGP) the chain is Extracellular. A helical membrane pass occupies residues 120–137 (IVSFFHLSLVQLLFALPV). Residues 138–161 (QFYVGWRFYKGAYHALKTKAPNMD) lie on the Cytoplasmic side of the membrane. Residues 162 to 181 (VLVAIGTSAAFALSIYNGFF) form a helical membrane-spanning segment. Topologically, residues 182–187 (PSHSHD) are extracellular. The chain crosses the membrane as a helical span at residues 188–203 (LYFESSSMIITLILLG). The Cytoplasmic portion of the chain corresponds to 204-341 (KYLEHTAKSK…PIQQIADKIS (138 aa)). Residues 342–362 (GIFVPIVLFLALVTLLVTGWL) traverse the membrane as a helical segment. Residues 363 to 375 (TKDWQLALLHSVS) are Extracellular-facing. Residues 376–396 (VLVIACPCALGLATPTAIMVG) form a helical membrane-spanning segment. The Cytoplasmic portion of the chain corresponds to 397–678 (TGVGAHNGIL…AATLKKIKQN (282 aa)). The active-site 4-aspartylphosphate intermediate is the D425. Residues D621 and D625 each contribute to the Mg(2+) site. Residues 679–698 (LFWAFIYNTIGIPFAAFGFL) traverse the membrane as a helical segment. Residues 699 to 700 (NP) are Extracellular-facing. Residues 701 to 721 (IIAGGAMAFSSISVLLNSLSL) form a helical membrane-spanning segment. The Cytoplasmic portion of the chain corresponds to 722 to 727 (NRKTIK).

Belongs to the cation transport ATPase (P-type) (TC 3.A.3) family. Type IB subfamily. In terms of assembly, monomer. Interacts with the copper chaperone CopZ.

Its subcellular location is the cell membrane. It catalyses the reaction Cu(+)(in) + ATP + H2O = Cu(+)(out) + ADP + phosphate + H(+). Its activity is regulated as follows. Inhibited by vanadate. Probably involved in copper import under copper limiting conditions. The polypeptide is Probable copper-importing P-type ATPase A (copA) (Enterococcus hirae (strain ATCC 9790 / DSM 20160 / JCM 8729 / LMG 6399 / NBRC 3181 / NCIMB 6459 / NCDO 1258 / NCTC 12367 / WDCM 00089 / R)).